We begin with the raw amino-acid sequence, 524 residues long: Peptide chain release factor 3 (524 aa).

The region spanning 11-278 (AKRRTFAIIS…SFVQYAPEPG (268 aa)) is the tr-type G domain. Residues 20–27 (SHPDAGKT), 88–92 (DTPGH), and 142–145 (NKLD) contribute to the GTP site.

Belongs to the TRAFAC class translation factor GTPase superfamily. Classic translation factor GTPase family. PrfC subfamily.

Its subcellular location is the cytoplasm. Functionally, increases the formation of ribosomal termination complexes and stimulates activities of RF-1 and RF-2. It binds guanine nucleotides and has strong preference for UGA stop codons. It may interact directly with the ribosome. The stimulation of RF-1 and RF-2 is significantly reduced by GTP and GDP, but not by GMP. This Lacticaseibacillus casei (strain BL23) (Lactobacillus casei) protein is Peptide chain release factor 3.